A 462-amino-acid polypeptide reads, in one-letter code: L-seryl-tRNA(Sec) selenium transferase (462 aa).

An N6-(pyridoxal phosphate)lysine modification is found at lysine 292.

Belongs to the SelA family. Pyridoxal 5'-phosphate is required as a cofactor.

It is found in the cytoplasm. The enzyme catalyses L-seryl-tRNA(Sec) + selenophosphate + H(+) = L-selenocysteinyl-tRNA(Sec) + phosphate. It participates in aminoacyl-tRNA biosynthesis; selenocysteinyl-tRNA(Sec) biosynthesis; selenocysteinyl-tRNA(Sec) from L-seryl-tRNA(Sec) (bacterial route): step 1/1. Converts seryl-tRNA(Sec) to selenocysteinyl-tRNA(Sec) required for selenoprotein biosynthesis. This chain is L-seryl-tRNA(Sec) selenium transferase, found in Geobacter metallireducens (strain ATCC 53774 / DSM 7210 / GS-15).